We begin with the raw amino-acid sequence, 593 residues long: Probable metalloendopeptidase G1-type (593 aa).

Histidine 41 contributes to the Zn(2+) binding site. Glutamate 44 is an active-site residue. Residue histidine 45 coordinates Zn(2+).

This sequence belongs to the peptidase M44 family. The cofactor is Zn(2+).

Functionally, seems to be involved in viral proteins maturation by cleavage at Ala-Gly-|-Xaa motifs. This chain is Probable metalloendopeptidase G1-type, found in Homo sapiens (Human).